Here is a 1335-residue protein sequence, read N- to C-terminus: Aldehyde oxidase 2 (1335 aa).

Residues 8–95 (DVLVFFVNGR…GAAVTTVEGV (88 aa)) enclose the 2Fe-2S ferredoxin-type domain. Cys47, Cys52, Cys55, and Cys77 together coordinate [2Fe-2S] cluster. Gln116 serves as a coordination point for Mo-molybdopterin. Cys117, Cys120, Cys152, and Cys154 together coordinate [2Fe-2S] cluster. Cys154 contacts Mo-molybdopterin. The FAD-binding PCMH-type domain maps to 242–427 (FRGDRVTWVS…ESVHIPHSQK (186 aa)). FAD contacts are provided by residues 270–277 (LVLGNTAL), Ala351, Ser360, His364, Asp373, and Leu417. Mo-molybdopterin is bound by residues 821–822 (GF), 1103–1106 (ASVG), Gln1218, and Leu1285. Residue Glu1287 is the Proton acceptor; for azaheterocycle hydroxylase activity of the active site.

Belongs to the xanthine dehydrogenase family. As to quaternary structure, homodimer. The cofactor is [2Fe-2S] cluster. It depends on FAD as a cofactor. Requires Mo-molybdopterin as cofactor. As to expression, detected in kidney, Harderian gland and olfactory mucosa.

Its subcellular location is the cytoplasm. It catalyses the reaction an aldehyde + O2 + H2O = a carboxylate + H2O2 + H(+). Oxidase with broad substrate specificity, oxidizing aromatic azaheterocycles, such as phthalazine, as well as aldehydes, such as benzaldehyde and retinal. The polypeptide is Aldehyde oxidase 2 (AOX2) (Cavia porcellus (Guinea pig)).